The following is a 122-amino-acid chain: Histone H2B, gonadal (122 aa).

Residues 1-31 (MPPKPSGKGQKKAGKAKGAPRTDKKRRRKRK) are disordered. Proline 2 carries the post-translational modification N,N-dimethylproline. O-linked (GlcNAc) serine glycosylation is present at serine 109. Residue lysine 117 forms a Glycyl lysine isopeptide (Lys-Gly) (interchain with G-Cter in ubiquitin) linkage.

The protein belongs to the histone H2B family. The nucleosome is a histone octamer containing two molecules each of H2A, H2B, H3 and H4 assembled in one H3-H4 heterotetramer and two H2A-H2B heterodimers. The octamer wraps approximately 147 bp of DNA. In terms of processing, monoubiquitination of Lys-117 gives a specific tag for epigenetic transcriptional activation and is also prerequisite for histone H3 'Lys-4' and 'Lys-79' methylation. GlcNAcylation at Ser-109 promotes monoubiquitination of Lys-117. It fluctuates in response to extracellular glucose, and associates with transcribed genes.

The protein localises to the nucleus. The protein resides in the chromosome. Core component of nucleosome. Nucleosomes wrap and compact DNA into chromatin, limiting DNA accessibility to the cellular machineries which require DNA as a template. Histones thereby play a central role in transcription regulation, DNA repair, DNA replication and chromosomal stability. DNA accessibility is regulated via a complex set of post-translational modifications of histones, also called histone code, and nucleosome remodeling. This Asterias rubens (Common European starfish) protein is Histone H2B, gonadal.